A 460-amino-acid polypeptide reads, in one-letter code: tRNA modification GTPase MnmE (460 aa).

(6S)-5-formyl-5,6,7,8-tetrahydrofolate is bound by residues Arg-25, Glu-87, and Arg-126. The TrmE-type G domain occupies 221–381 (GLKVAIVGRP…LETAIANLVQ (161 aa)). Asn-231 contacts K(+). GTP is bound by residues 231 to 236 (NVGKSS), 250 to 256 (TDLPGTT), and 275 to 278 (DTAG). Residue Ser-235 coordinates Mg(2+). K(+) contacts are provided by Thr-250, Leu-252, and Thr-255. Thr-256 is a Mg(2+) binding site. Lys-460 serves as a coordination point for (6S)-5-formyl-5,6,7,8-tetrahydrofolate.

It belongs to the TRAFAC class TrmE-Era-EngA-EngB-Septin-like GTPase superfamily. TrmE GTPase family. In terms of assembly, homodimer. Heterotetramer of two MnmE and two MnmG subunits. K(+) serves as cofactor.

It localises to the cytoplasm. In terms of biological role, exhibits a very high intrinsic GTPase hydrolysis rate. Involved in the addition of a carboxymethylaminomethyl (cmnm) group at the wobble position (U34) of certain tRNAs, forming tRNA-cmnm(5)s(2)U34. The polypeptide is tRNA modification GTPase MnmE (Picosynechococcus sp. (strain ATCC 27264 / PCC 7002 / PR-6) (Agmenellum quadruplicatum)).